Reading from the N-terminus, the 1221-residue chain is DNA-directed RNA polymerase subunit beta' (1221 aa).

Cys60, Cys62, Cys75, and Cys78 together coordinate Zn(2+). Mg(2+) is bound by residues Asp449, Asp451, and Asp453. Zn(2+)-binding residues include Cys821, Cys896, Cys903, and Cys906.

It belongs to the RNA polymerase beta' chain family. In terms of assembly, the RNAP catalytic core consists of 2 alpha, 1 beta, 1 beta' and 1 omega subunit. When a sigma factor is associated with the core the holoenzyme is formed, which can initiate transcription. The cofactor is Mg(2+). Zn(2+) serves as cofactor.

It catalyses the reaction RNA(n) + a ribonucleoside 5'-triphosphate = RNA(n+1) + diphosphate. In terms of biological role, DNA-dependent RNA polymerase catalyzes the transcription of DNA into RNA using the four ribonucleoside triphosphates as substrates. This is DNA-directed RNA polymerase subunit beta' from Lactobacillus delbrueckii subsp. bulgaricus (strain ATCC 11842 / DSM 20081 / BCRC 10696 / JCM 1002 / NBRC 13953 / NCIMB 11778 / NCTC 12712 / WDCM 00102 / Lb 14).